A 205-amino-acid chain; its full sequence is Peptidyl-tRNA hydrolase (205 aa).

Residue Y18 participates in tRNA binding. H23 functions as the Proton acceptor in the catalytic mechanism. TRNA-binding residues include Y69, N71, and N117.

The protein belongs to the PTH family. Monomer.

It is found in the cytoplasm. It carries out the reaction an N-acyl-L-alpha-aminoacyl-tRNA + H2O = an N-acyl-L-amino acid + a tRNA + H(+). Hydrolyzes ribosome-free peptidyl-tRNAs (with 1 or more amino acids incorporated), which drop off the ribosome during protein synthesis, or as a result of ribosome stalling. Its function is as follows. Catalyzes the release of premature peptidyl moieties from peptidyl-tRNA molecules trapped in stalled 50S ribosomal subunits, and thus maintains levels of free tRNAs and 50S ribosomes. The protein is Peptidyl-tRNA hydrolase of Thermosynechococcus vestitus (strain NIES-2133 / IAM M-273 / BP-1).